Consider the following 211-residue polypeptide: Nitrogen fixation regulation protein FixK (211 aa).

The region spanning 134-204 (QCAVERIAAF…ARTIDIMKPE (71 aa)) is the HTH crp-type domain. Positions 163–182 (RQDIADYLGLTIETVSRVVT) form a DNA-binding region, H-T-H motif.

FixK is a protein that regulates nitrogen fixation genes both positively and negatively. FixK appears to repress its own expression and that of nifA. FixK may bind DNA at the FNR consensus binding site. The sequence is that of Nitrogen fixation regulation protein FixK (fixK) from Rhizobium meliloti (strain 1021) (Ensifer meliloti).